Reading from the N-terminus, the 413-residue chain is Heparan-sulfate 6-O-sulfotransferase 1-A (413 aa).

Residues 9–15 lie on the Cytoplasmic side of the membrane; the sequence is MVERSSK. Residues 16–36 form a helical; Signal-anchor for type II membrane protein membrane-spanning segment; it reads FLFIVVGSVLFMLILYQYVAP. Topologically, residues 37-413 are lumenal; sequence GMMNFGSPHG…DYMNHIINRW (377 aa). 92 to 100 contacts 3'-phosphoadenylyl sulfate; it reads HIQKTGGTT. Residues 122 to 123, Arg139, Trp144, and His149 each bind substrate; that span reads KK. The active-site Proton acceptor is the His149. Residues Arg183 and Ser191 each coordinate 3'-phosphoadenylyl sulfate. His195 and Trp202 together coordinate substrate. N-linked (GlcNAc...) asparagine glycosylation is present at Asn262. Residue 315–317 participates in 3'-phosphoadenylyl sulfate binding; sequence MQY. N-linked (GlcNAc...) asparagine glycosylation is present at Asn318. 321 to 322 is a binding site for 3'-phosphoadenylyl sulfate; sequence RA. N-linked (GlcNAc...) asparagine glycosylation is present at Asn329. A disordered region spans residues 374 to 401; the sequence is PLFPFRRTSSSDSTFRDDAPESEGSRLP.

It belongs to the sulfotransferase 6 family. During somitogenesis, first expressed in polster and presumptive forebrain. During mid-somitogenesis, expressed in eye, hindbrain and anterior spinal cord. During late somitogenesis, strong expression in eye and hindbrain, decreased levels in midbrain and anterior spinal cord. At 24 hours post-fertilization (hpf), expressed in neural retina and lens, brain and anterior spinal cord. At 36 hpf, retinal expression is confined to the ciliary marginal zone and there is strong expression in tectum, rhombomeres and otic vesicle. At 48 hpf, expressed in retinal ganglion cells and in tectum, rhombomeres and pectoral fin. Not detected in the vasculature during embryogenesis.

The protein resides in the membrane. The catalysed reaction is alpha-D-glucosaminyl-[heparan sulfate](n) + 3'-phosphoadenylyl sulfate = 6-sulfo-alpha-D-glucosaminyl-[heparan sulfate](n) + adenosine 3',5'-bisphosphate + H(+). 6-O-sulfation enzyme which catalyzes the transfer of sulfate from 3'-phosphoadenosine 5'-phosphosulfate (PAPS) to position 6 of the N-sulfoglucosamine residue (GlcNS) of heparan sulfate. This is Heparan-sulfate 6-O-sulfotransferase 1-A from Danio rerio (Zebrafish).